Here is a 265-residue protein sequence, read N- to C-terminus: S-acyl fatty acid synthase thioesterase, medium chain (265 aa).

Position 1 is an N-acetylmethionine (Met-1). Active-site residues include Ser-101 and His-237.

This sequence belongs to the thioesterase family. Interacts (via C-terminus) with FASN. As to expression, detected both in lactating and non-lactating breast epithelium (at protein level). Isoform 2 is up-regulated in bone marrow-derived mononuclear cells of rheumatoid arthritis patients.

The protein resides in the cytoplasm. It is found in the cytosol. It carries out the reaction (9Z)-octadecenoyl-[ACP] + H2O = (9Z)-octadecenoate + holo-[ACP] + H(+). It catalyses the reaction decanoyl-CoA + H2O = decanoate + CoA + H(+). The catalysed reaction is dodecanoyl-CoA + H2O = dodecanoate + CoA + H(+). The enzyme catalyses tetradecanoyl-CoA + H2O = tetradecanoate + CoA + H(+). It carries out the reaction hexadecanoyl-CoA + H2O = hexadecanoate + CoA + H(+). In terms of biological role, contributes to the release of free fatty acids from fatty acid synthase (FASN). Has broad substrate specificity, giving rise to a range of free fatty acids with chain lengths between 10 and 16 carbon atoms (C10 - C16). This Homo sapiens (Human) protein is S-acyl fatty acid synthase thioesterase, medium chain.